A 536-amino-acid chain; its full sequence is Light-independent protochlorophyllide reductase subunit B (536 aa).

Asp-36 serves as a coordination point for [4Fe-4S] cluster. Asp-292 (proton donor) is an active-site residue. 427-428 (GL) contributes to the substrate binding site. A disordered region spans residues 447-489 (QSHLGHLGGHQSQTEQQQSQAATNPSTQSNTDSSSEESPLWTP). Low complexity predominate over residues 448–469 (SHLGHLGGHQSQTEQQQSQAAT). Over residues 470-483 (NPSTQSNTDSSSEE) the composition is skewed to polar residues.

This sequence belongs to the ChlB/BchB/BchZ family. Protochlorophyllide reductase is composed of three subunits; ChlL, ChlN and ChlB. Forms a heterotetramer of two ChlB and two ChlN subunits. [4Fe-4S] cluster serves as cofactor.

The catalysed reaction is chlorophyllide a + oxidized 2[4Fe-4S]-[ferredoxin] + 2 ADP + 2 phosphate = protochlorophyllide a + reduced 2[4Fe-4S]-[ferredoxin] + 2 ATP + 2 H2O. It functions in the pathway porphyrin-containing compound metabolism; chlorophyll biosynthesis (light-independent). Component of the dark-operative protochlorophyllide reductase (DPOR) that uses Mg-ATP and reduced ferredoxin to reduce ring D of protochlorophyllide (Pchlide) to form chlorophyllide a (Chlide). This reaction is light-independent. The NB-protein (ChlN-ChlB) is the catalytic component of the complex. The chain is Light-independent protochlorophyllide reductase subunit B from Prochlorococcus marinus (strain MIT 9303).